Here is a 324-residue protein sequence, read N- to C-terminus: uncharacterized protein (324 aa).

To the C-terminal of para-aminobenzoate synthase component I.

This is an uncharacterized protein from Pasteurella multocida (strain Pm70).